A 366-amino-acid chain; its full sequence is Tetraacyldisaccharide 4'-kinase (366 aa).

Residue T65–T72 participates in ATP binding. The disordered stretch occupies residues A343–A366. Over residues N356–A366 the composition is skewed to basic and acidic residues.

Belongs to the LpxK family.

It catalyses the reaction a lipid A disaccharide + ATP = a lipid IVA + ADP + H(+). Its pathway is glycolipid biosynthesis; lipid IV(A) biosynthesis; lipid IV(A) from (3R)-3-hydroxytetradecanoyl-[acyl-carrier-protein] and UDP-N-acetyl-alpha-D-glucosamine: step 6/6. In terms of biological role, transfers the gamma-phosphate of ATP to the 4'-position of a tetraacyldisaccharide 1-phosphate intermediate (termed DS-1-P) to form tetraacyldisaccharide 1,4'-bis-phosphate (lipid IVA). This chain is Tetraacyldisaccharide 4'-kinase, found in Cupriavidus pinatubonensis (strain JMP 134 / LMG 1197) (Cupriavidus necator (strain JMP 134)).